A 208-amino-acid polypeptide reads, in one-letter code: Histone H1t (208 aa).

Residues Met-1–Leu-12 show a composition bias toward polar residues. A disordered region spans residues Met-1–Gly-39. Ser-9 is modified (phosphoserine). The H15 domain maps to Arg-38 to Lys-111. Citrulline is present on Arg-56. The interval Gly-93–Lys-208 is disordered. A compositionally biased stretch (basic residues) spans Lys-121 to Gly-134. At Ser-141 the chain carries Phosphoserine. Residues Lys-143–Lys-154 show a composition bias toward basic residues. Residue Thr-156 is modified to Phosphothreonine. Phosphoserine is present on residues Ser-163, Ser-178, and Ser-187. Basic and acidic residues predominate over residues Thr-199–Lys-208.

This sequence belongs to the histone H1/H5 family. In terms of processing, phosphorylated in early spermatids. Post-translationally, citrullination at Arg-56 (H1R54ci) by PADI4 takes place within the DNA-binding site of H1 and results in its displacement from chromatin and global chromatin decondensation, thereby promoting pluripotency and stem cell maintenance. In terms of tissue distribution, testis-specific. Expressed in pachytene spermatocytes during meiotic prophase I.

The protein resides in the nucleus. It is found in the chromosome. Testis-specific histone H1 that forms less compacted chromatin compared to other H1 histone subtypes. Formation of more relaxed chromatin may be required to promote chromatin architecture required for proper chromosome regulation during meiosis, such as homologous recombination. Histones H1 act as linkers that bind to nucleosomes and compact polynucleosomes into a higher-order chromatin configuration. The protein is Histone H1t of Rattus norvegicus (Rat).